The following is a 167-amino-acid chain: UPF0114 protein Tola_1474 (167 aa).

The next 4 helical transmembrane spans lie at 15 to 35 (IMAPIYLGLSLALLALGIKFF), 53 to 73 (LILIILSLIDISLVGGLIVMV), 109 to 129 (VAASIVAISSIHLLKVFMNTE), and 136 to 156 (IKWYLLIHITFVMSAFAMGYL).

Belongs to the UPF0114 family.

It is found in the cell membrane. This chain is UPF0114 protein Tola_1474, found in Tolumonas auensis (strain DSM 9187 / NBRC 110442 / TA 4).